Consider the following 262-residue polypeptide: tRNA pseudouridine synthase A (262 aa).

Catalysis depends on D54, which acts as the Nucleophile. Y113 serves as a coordination point for substrate.

The protein belongs to the tRNA pseudouridine synthase TruA family. Homodimer.

It catalyses the reaction uridine(38/39/40) in tRNA = pseudouridine(38/39/40) in tRNA. Functionally, formation of pseudouridine at positions 38, 39 and 40 in the anticodon stem and loop of transfer RNAs. The sequence is that of tRNA pseudouridine synthase A from Lactobacillus delbrueckii subsp. bulgaricus (strain ATCC BAA-365 / Lb-18).